The sequence spans 95 residues: Protein TusB (95 aa).

It belongs to the DsrH/TusB family. Heterohexamer, formed by a dimer of trimers. The hexameric TusBCD complex contains 2 copies each of TusB, TusC and TusD. The TusBCD complex interacts with TusE.

It is found in the cytoplasm. Functionally, part of a sulfur-relay system required for 2-thiolation of 5-methylaminomethyl-2-thiouridine (mnm(5)s(2)U) at tRNA wobble positions. The chain is Protein TusB from Klebsiella pneumoniae (strain 342).